The sequence spans 223 residues: DNA replication complex GINS protein SLD5 (223 aa).

Position 1 is an N-acetylmethionine (Met-1). Thr-2 bears the N-acetylthreonine; in DNA replication complex GINS protein SLD5, N-terminally processed mark. A phosphoserine mark is found at Ser-12 and Ser-16. Residues 166-223 are important for GINS complex assembly; it reads DLDSYVFLRVKERQENILVEPEADEQRDYVIDLEVGSQHLIRYKTIAPLVASGAVQLI.

The protein belongs to the GINS4/SLD5 family. As to quaternary structure, component of the CMG helicase complex, a hexameric ring of related MCM2-7 subunits stabilized by CDC45 and the tetrameric GINS complex. Associated with ORC2. Interacts with HELB. Highly abundant in testis. Weakly expressed in thymus and bone marrow.

It is found in the nucleus. The protein localises to the chromosome. It localises to the cytoplasm. Its function is as follows. Required for initiation of chromosomal DNA replication. Core component of CDC45-MCM-GINS (CMG) helicase, the molecular machine that unwinds template DNA during replication, and around which the replisome is built. This is DNA replication complex GINS protein SLD5 (Gins4) from Mus musculus (Mouse).